The chain runs to 376 residues: MQIITCKAVVCWAAGEPPVVEEILVEPPRSGEVRIKILFASLCHTDVLACKGFPTPMFPRVLGHEGVGVVECVGEGVSELREGDVVIPTYLGECGECENCESGRTNLCRTYPLQAFTGLMPDGSSRMSSAKGGEMLYQFLSCSTWSEYTVIDANYAVKIDSRIPLPHASFLSCGFTTGFGATWKEAKLQEGSSTVAVLGLGAVGLGAVEGARVQGVTQIIGIDINDNKREKGEAFGMTHFINPKKDNNKSISELVKELTKGQGVDVCFECTGVPDLVNEALESTKIGTGNMIMLGAGTQKSMTINFVSLLGCRTFKYSVFGGVKVQSDLPLIIQKCLNKEIQKIEQLLTHQVQLEDINRAFELLKEPDCVKVLITL.

Zn(2+) contacts are provided by Cys43, Thr45, His64, Cys94, Cys97, Cys100, Cys108, and Cys173. Thr45 is a binding site for NAD(+). Substrate-binding residues include Thr45 and His64. Residues Gly199 to Gly204, Asp223, Lys228, Leu294 to Ala296, Phe320, and Lys371 contribute to the NAD(+) site.

Belongs to the zinc-containing alcohol dehydrogenase family. Class-III subfamily. Homodimer. The cofactor is Zn(2+).

Its pathway is alkaloid biosynthesis. Functionally, may be a positive catalyzer of strictosidine production by assisting secologanin biosynthesis, thus being involved in monoterpene indole alkaloids accumulation. This Catharanthus roseus (Madagascar periwinkle) protein is CYP enzymes assisting alcohol dehydrogenase.